Reading from the N-terminus, the 455-residue chain is Pup--protein ligase (455 aa).

Glu12 serves as a coordination point for Mg(2+). An ATP-binding site is contributed by Arg56. A Mg(2+)-binding site is contributed by Tyr58. Asp60 serves as the catalytic Proton acceptor. Residue Glu66 participates in Mg(2+) binding. Residues Thr69 and Trp422 each coordinate ATP.

This sequence belongs to the Pup ligase/Pup deamidase family. Pup-conjugating enzyme subfamily.

The enzyme catalyses ATP + [prokaryotic ubiquitin-like protein]-L-glutamate + [protein]-L-lysine = ADP + phosphate + N(6)-([prokaryotic ubiquitin-like protein]-gamma-L-glutamyl)-[protein]-L-lysine.. It participates in protein degradation; proteasomal Pup-dependent pathway. Its pathway is protein modification; protein pupylation. Functionally, catalyzes the covalent attachment of the prokaryotic ubiquitin-like protein modifier Pup to the proteasomal substrate proteins, thereby targeting them for proteasomal degradation. This tagging system is termed pupylation. The ligation reaction involves the side-chain carboxylate of the C-terminal glutamate of Pup and the side-chain amino group of a substrate lysine. This chain is Pup--protein ligase, found in Acidimicrobium ferrooxidans (strain DSM 10331 / JCM 15462 / NBRC 103882 / ICP).